The chain runs to 213 residues: Ethylene-responsive transcription factor WIN1 (213 aa).

A DNA-binding region (AP2/ERF) is located at residues lysine 15–proline 72. Residues asparagine 70 to glutamate 80 show a composition bias toward polar residues. Disordered stretches follow at residues asparagine 70–threonine 99 and alanine 159–isoleucine 213. The segment covering alanine 159–proline 174 has biased composition (low complexity).

The protein belongs to the AP2/ERF transcription factor family. ERF subfamily. Mostly expressed in roots, stems and anthers, and, to a lower extent, in leaves, seeds and silks.

It is found in the nucleus. Functionally, promotes cuticle formation by inducing the expression of enzymes involved in wax biosynthesis, particularly promoting very-long-chain waxes formation. Confers drought resistance. Acts as a transcriptional activator binding directly to promoter regions of CER2, CER3.2 and KCS1, wax biosynthesis-related genes. Binds to the GCC-box pathogenesis-related promoter element. May be involved in the regulation of gene expression by stress factors and by components of stress signal transduction pathways. The chain is Ethylene-responsive transcription factor WIN1 from Zea mays (Maize).